The primary structure comprises 111 residues: MSQADMTCSARQRVFQEALRKGNTKELHSLLQNMTNCEFNVNSFGPEGQTALHQSVIDGNLELVKLLVKFGADTRLANRDGWSALHIAAFGGHQDIVLYLITRAKYSSSAL.

ANK repeat units lie at residues 47–76 (EGQT…DTRL) and 80–109 (DGWS…YSSS).

It belongs to the NRARP family.

Regulates independently canonical Wnt and Notch signaling by modulating LEF1 and Notch protein turnover. Stabilizes LEF1, a pivotal transcription factor in the Wnt signaling cascade, by blocking its ubiquitination. Involved in angiogenesis; involved in intersegmental vessel patterning during development. In Danio rerio (Zebrafish), this protein is Notch-regulated ankyrin repeat-containing protein B (nrarpb).